We begin with the raw amino-acid sequence, 274 residues long: Large ribosomal subunit protein uL2cz/uL2cy (274 aa).

2 disordered regions span residues 1–21 and 224–252; these read MAIH…VDSQ and NPVD…GYPA.

The protein belongs to the universal ribosomal protein uL2 family. Part of the 50S ribosomal subunit.

It is found in the plastid. The protein resides in the chloroplast. In Olimarabidopsis pumila (Dwarf rocket), this protein is Large ribosomal subunit protein uL2cz/uL2cy (rpl2-A).